The primary structure comprises 371 residues: Chaperone protein DnaJ (371 aa).

The 65-residue stretch at 5–69 (DYYEILGIAK…QKRAAYDQHG (65 aa)) folds into the J domain. Residues 127-205 (GASKEIHITT…CRGQGKVEEP (79 aa)) form a CR-type zinc finger. Residues Cys140, Cys143, Cys157, Cys160, Cys179, Cys182, Cys193, and Cys196 each coordinate Zn(2+). CXXCXGXG motif repeat units lie at residues 140–147 (CEHCKGSG), 157–164 (CTTCRGVG), 179–186 (CPRCHGQG), and 193–200 (CRQCRGQG).

It belongs to the DnaJ family. As to quaternary structure, homodimer. The cofactor is Zn(2+).

It is found in the cytoplasm. Participates actively in the response to hyperosmotic and heat shock by preventing the aggregation of stress-denatured proteins and by disaggregating proteins, also in an autonomous, DnaK-independent fashion. Unfolded proteins bind initially to DnaJ; upon interaction with the DnaJ-bound protein, DnaK hydrolyzes its bound ATP, resulting in the formation of a stable complex. GrpE releases ADP from DnaK; ATP binding to DnaK triggers the release of the substrate protein, thus completing the reaction cycle. Several rounds of ATP-dependent interactions between DnaJ, DnaK and GrpE are required for fully efficient folding. Also involved, together with DnaK and GrpE, in the DNA replication of plasmids through activation of initiation proteins. The chain is Chaperone protein DnaJ from Hamiltonella defensa subsp. Acyrthosiphon pisum (strain 5AT).